Here is a 591-residue protein sequence, read N- to C-terminus: L-fucose isomerase (591 aa).

Active-site proton acceptor residues include glutamate 337 and aspartate 361. 3 residues coordinate Mn(2+): glutamate 337, aspartate 361, and histidine 528.

This sequence belongs to the L-fucose isomerase family. Homohexamer. Mn(2+) is required as a cofactor.

It localises to the cytoplasm. The enzyme catalyses L-fucose = L-fuculose. The protein operates within carbohydrate degradation; L-fucose degradation; L-lactaldehyde and glycerone phosphate from L-fucose: step 1/3. Functionally, converts the aldose L-fucose into the corresponding ketose L-fuculose. This is L-fucose isomerase from Salmonella heidelberg (strain SL476).